Here is a 307-residue protein sequence, read N- to C-terminus: O-acetylserine dependent cystathionine beta-synthase (307 aa).

Lysine 44 is modified (N6-(pyridoxal phosphate)lysine). Residues asparagine 74, 178–182 (GSGGT), and serine 265 contribute to the pyridoxal 5'-phosphate site.

This sequence belongs to the cysteine synthase/cystathionine beta-synthase family. The cofactor is pyridoxal 5'-phosphate.

It catalyses the reaction O-acetyl-L-serine + L-homocysteine = L,L-cystathionine + acetate + H(+). Its function is as follows. Catalyzes the conversion of O-acetylserine and homocysteine to cystathionine. The protein is O-acetylserine dependent cystathionine beta-synthase (mccA) of Bacillus subtilis (strain 168).